A 199-amino-acid polypeptide reads, in one-letter code: Riboflavin synthase (199 aa).

2 Lumazine-binding repeats span residues 1 to 95 (MFSG…IGGH) and 96 to 188 (FVSG…VDTI). Residues 4–6 (GII), 46–48 (CLT), 60–65 (DVTEET), 99–101 (GHV), Lys130, 139–141 (SLT), and 153–158 (SLIPET) contribute to the 2,4-dihydroxypteridine site.

As to quaternary structure, homotrimer.

The enzyme catalyses 2 6,7-dimethyl-8-(1-D-ribityl)lumazine + H(+) = 5-amino-6-(D-ribitylamino)uracil + riboflavin. It functions in the pathway cofactor biosynthesis; riboflavin biosynthesis; riboflavin from 2-hydroxy-3-oxobutyl phosphate and 5-amino-6-(D-ribitylamino)uracil: step 2/2. Its function is as follows. Catalyzes the dismutation of two molecules of 6,7-dimethyl-8-ribityllumazine, resulting in the formation of riboflavin and 5-amino-6-(D-ribitylamino)uracil. This chain is Riboflavin synthase (ribE), found in Chlamydia trachomatis serovar D (strain ATCC VR-885 / DSM 19411 / UW-3/Cx).